The chain runs to 397 residues: Riboflavin biosynthesis protein RibBA (397 aa).

Positions 1 to 199 are DHBP synthase; the sequence is MFHRIEEALE…IEDLIAYRRH (199 aa). D-ribulose 5-phosphate-binding positions include 26-27, D31, 138-142, and E162; these read RE and RAGHT. E27 is a binding site for Mg(2+). Residue H141 coordinates Mg(2+). The segment at 200–397 is GTP cyclohydrolase II; sequence HETLVTREVE…VNKLGHLLNL (198 aa). 250-254 lines the GTP pocket; sequence RVHSE. The Zn(2+) site is built by C255, C266, and C268. Residues Q271, 293 to 295, and T315 each bind GTP; that span reads EGR. D327 acts as the Proton acceptor; for GTP cyclohydrolase activity in catalysis. R329 functions as the Nucleophile; for GTP cyclohydrolase activity in the catalytic mechanism. Positions 350 and 355 each coordinate GTP.

The protein in the N-terminal section; belongs to the DHBP synthase family. In the C-terminal section; belongs to the GTP cyclohydrolase II family. Requires Mg(2+) as cofactor. The cofactor is Mn(2+). Zn(2+) serves as cofactor.

It carries out the reaction D-ribulose 5-phosphate = (2S)-2-hydroxy-3-oxobutyl phosphate + formate + H(+). The enzyme catalyses GTP + 4 H2O = 2,5-diamino-6-hydroxy-4-(5-phosphoribosylamino)-pyrimidine + formate + 2 phosphate + 3 H(+). The protein operates within cofactor biosynthesis; riboflavin biosynthesis; 2-hydroxy-3-oxobutyl phosphate from D-ribulose 5-phosphate: step 1/1. Its pathway is cofactor biosynthesis; riboflavin biosynthesis; 5-amino-6-(D-ribitylamino)uracil from GTP: step 1/4. Catalyzes the conversion of D-ribulose 5-phosphate to formate and 3,4-dihydroxy-2-butanone 4-phosphate. Its function is as follows. Catalyzes the conversion of GTP to 2,5-diamino-6-ribosylamino-4(3H)-pyrimidinone 5'-phosphate (DARP), formate and pyrophosphate. The protein is Riboflavin biosynthesis protein RibBA of Bacillus cereus (strain AH187).